A 202-amino-acid chain; its full sequence is Putative 3-methyladenine DNA glycosylase (202 aa).

Belongs to the DNA glycosylase MPG family.

The polypeptide is Putative 3-methyladenine DNA glycosylase (Staphylococcus aureus (strain Mu3 / ATCC 700698)).